The chain runs to 205 residues: Holliday junction branch migration complex subunit RuvA (205 aa).

A domain I region spans residues 1-64; that stretch reads MIGKLKGLID…EDQIKLFGFR (64 aa). The tract at residues 65 to 143 is domain II; that stretch reads SDVEREWFRL…AFADVDPGVI (79 aa). Positions 144 to 154 are flexible linker; the sequence is RLSGAIEDSRA. Positions 154 to 205 are domain III; the sequence is APQPIADAISALINLGYGQPQAAAAIAAASRAAGDKAETAQLIRLGLKELAK.

This sequence belongs to the RuvA family. As to quaternary structure, homotetramer. Forms an RuvA(8)-RuvB(12)-Holliday junction (HJ) complex. HJ DNA is sandwiched between 2 RuvA tetramers; dsDNA enters through RuvA and exits via RuvB. An RuvB hexamer assembles on each DNA strand where it exits the tetramer. Each RuvB hexamer is contacted by two RuvA subunits (via domain III) on 2 adjacent RuvB subunits; this complex drives branch migration. In the full resolvosome a probable DNA-RuvA(4)-RuvB(12)-RuvC(2) complex forms which resolves the HJ.

The protein resides in the cytoplasm. In terms of biological role, the RuvA-RuvB-RuvC complex processes Holliday junction (HJ) DNA during genetic recombination and DNA repair, while the RuvA-RuvB complex plays an important role in the rescue of blocked DNA replication forks via replication fork reversal (RFR). RuvA specifically binds to HJ cruciform DNA, conferring on it an open structure. The RuvB hexamer acts as an ATP-dependent pump, pulling dsDNA into and through the RuvAB complex. HJ branch migration allows RuvC to scan DNA until it finds its consensus sequence, where it cleaves and resolves the cruciform DNA. This chain is Holliday junction branch migration complex subunit RuvA, found in Bradyrhizobium sp. (strain BTAi1 / ATCC BAA-1182).